The chain runs to 426 residues: Serine--tRNA ligase (426 aa).

233-235 (TAE) serves as a coordination point for L-serine. Residue 264–266 (RSE) participates in ATP binding. E287 provides a ligand contact to L-serine. 351–354 (EISS) lines the ATP pocket. S387 is an L-serine binding site.

This sequence belongs to the class-II aminoacyl-tRNA synthetase family. Type-1 seryl-tRNA synthetase subfamily. Homodimer. The tRNA molecule binds across the dimer.

It is found in the cytoplasm. It carries out the reaction tRNA(Ser) + L-serine + ATP = L-seryl-tRNA(Ser) + AMP + diphosphate + H(+). It catalyses the reaction tRNA(Sec) + L-serine + ATP = L-seryl-tRNA(Sec) + AMP + diphosphate + H(+). It functions in the pathway aminoacyl-tRNA biosynthesis; selenocysteinyl-tRNA(Sec) biosynthesis; L-seryl-tRNA(Sec) from L-serine and tRNA(Sec): step 1/1. Functionally, catalyzes the attachment of serine to tRNA(Ser). Is also able to aminoacylate tRNA(Sec) with serine, to form the misacylated tRNA L-seryl-tRNA(Sec), which will be further converted into selenocysteinyl-tRNA(Sec). This is Serine--tRNA ligase from Clostridium botulinum (strain Langeland / NCTC 10281 / Type F).